The primary structure comprises 894 residues: Microsomal triglyceride transfer protein large subunit (894 aa).

A signal peptide spans 1–18 (MILLAVLFLCFISSYSAS). In terms of domain architecture, Vitellogenin spans 28-659 (LNNDRLYKLT…IFQYIGKAGL (632 aa)). Cys174 and Cys194 are joined by a disulfide.

In terms of assembly, heterodimer; heterodimerizes with the protein disulfide isomerase (P4HB/PDI). Interacts with APOB. Interacts with PRAP1. Liver and small intestine. Also found in ovary, testis and kidney.

The protein localises to the endoplasmic reticulum. The protein resides in the golgi apparatus. The catalysed reaction is a 1,2-diacyl-sn-glycero-3-phosphocholine(in) = a 1,2-diacyl-sn-glycero-3-phosphocholine(out). It carries out the reaction a 1,2-diacyl-sn-glycero-3-phosphoethanolamine(in) = a 1,2-diacyl-sn-glycero-3-phosphoethanolamine(out). It catalyses the reaction a cholesterol ester(in) = a cholesterol ester(out). The enzyme catalyses a triacyl-sn-glycerol(in) = a triacyl-sn-glycerol(out). In terms of biological role, catalyzes the transport of triglyceride, cholesteryl ester, and phospholipid between phospholipid surfaces. Required for the assembly and secretion of plasma lipoproteins that contain apolipoprotein B. May be involved in regulating cholesteryl ester biosynthesis in cells that produce lipoproteins. This Homo sapiens (Human) protein is Microsomal triglyceride transfer protein large subunit (MTTP).